The chain runs to 246 residues: Probable transcriptional regulatory protein ORF2U (246 aa).

The protein belongs to the TACO1 family.

The protein localises to the cytoplasm. This Hathewaya histolytica (Clostridium histolyticum) protein is Probable transcriptional regulatory protein ORF2U.